A 1024-amino-acid polypeptide reads, in one-letter code: Beta-galactosidase (1024 aa).

Residues N103 and D202 each coordinate substrate. Residue D202 participates in Na(+) binding. Mg(2+) contacts are provided by E417, H419, and E462. Substrate is bound by residues E462 and 538 to 541; that span reads EYAH. E462 (proton donor) is an active-site residue. E538 serves as the catalytic Nucleophile. N598 serves as a coordination point for Mg(2+). The Na(+) site is built by F602 and N605. Substrate contacts are provided by N605 and W1000.

The protein belongs to the glycosyl hydrolase 2 family. As to quaternary structure, homotetramer. Requires Mg(2+) as cofactor. Na(+) serves as cofactor.

It catalyses the reaction Hydrolysis of terminal non-reducing beta-D-galactose residues in beta-D-galactosides.. The polypeptide is Beta-galactosidase (Escherichia coli O6:H1 (strain CFT073 / ATCC 700928 / UPEC)).